The following is a 473-amino-acid chain: Ribulose bisphosphate carboxylase large chain (473 aa).

Positions 116 and 166 each coordinate substrate. The active-site Proton acceptor is the Lys-168. Lys-170 lines the substrate pocket. Mg(2+)-binding residues include Lys-194, Asp-196, and Glu-197. Lys-194 carries the post-translational modification N6-carboxylysine. Residue His-287 is the Proton acceptor of the active site. 3 residues coordinate substrate: Arg-288, His-320, and Ser-372.

It belongs to the RuBisCO large chain family. Type I subfamily. In terms of assembly, heterohexadecamer of 8 large chains and 8 small chains. Requires Mg(2+) as cofactor.

The catalysed reaction is 2 (2R)-3-phosphoglycerate + 2 H(+) = D-ribulose 1,5-bisphosphate + CO2 + H2O. It carries out the reaction D-ribulose 1,5-bisphosphate + O2 = 2-phosphoglycolate + (2R)-3-phosphoglycerate + 2 H(+). RuBisCO catalyzes two reactions: the carboxylation of D-ribulose 1,5-bisphosphate, the primary event in carbon dioxide fixation, as well as the oxidative fragmentation of the pentose substrate. Both reactions occur simultaneously and in competition at the same active site. The protein is Ribulose bisphosphate carboxylase large chain of Halorhodospira halophila (strain DSM 244 / SL1) (Ectothiorhodospira halophila (strain DSM 244 / SL1)).